Reading from the N-terminus, the 552-residue chain is MNNSIISSVINSIDSSSKRTNIFSFDVQQPTAYMPQYISVNGYHNKKDNDANQVCSVSFDIRDQHIAAINYFFISIQLPEVSGEGKFAYVPYVGYKCIQHVAITCGDITIWETDGEELFDKCVDDKIASLSGYSPELNDISTGYTPNDTIKDPTTLYVYIKSPFDADKTISSLKLVNNKITVTITFRSINDVIVYDSKFQVERFVKDFVYSTELHLIAYAVSDIKPKSAYIELDRRVVSCSSTPTPIPVISDVYACTAMSVYVKPYYGMMENKFISYPGYKQTESDYVRCMVNRLLDDLVVVADTVPKGFPSTATFVKVPVDGQINLQDVDIIVKIDNVPDDKDIYYHTNLLIFGTRKNSFVYNISKKFSSIIGMYSPNTDSINFSKVNHTISITDASIPVSFWVSQKNVYQGDNRSNYSKSKDLVVNDPFRKGIDMVNKTDVISRLEVRFGNDPIYSEISPITKVFNMLLTGSSINMRKIIFNMNPANIFRPTTLNANTKRGKDKLTVRISYIDTDPNNPIHYVAKQLVVICTDLYRIDYDGNINITKITE.

It belongs to the poxviridae protein D13 family. Homotrimer. Self-assembles to form a layer. Interacts with A17 (via N-terminus); this interaction is necessary for D13 association with membranes.

The protein resides in the membrane. Its function is as follows. Scaffold protein which forms a transitory spherical honeycomb lattice providing curvature and rigidity to the convex membrane of crescent and immature virions (IV). This association occurs concomitantly with viral membrane formation. Targeted by the drug rifampicin, which prevents the formation of this lattice, and hence virus morphogenesis. In the presence of rifampicin, irregularly shaped membranes that lack the honeycomb layer accumulate around areas of electron-dense viroplasm. This layer is lost from virions during maturation from IV to mature virion (MV), through the proteolysis of A17 N-terminus. The protein is Scaffold protein of Vertebrata (FPV).